Reading from the N-terminus, the 94-residue chain is CRISPR-associated endoribonuclease Cas2 1 (94 aa).

Asp8 provides a ligand contact to Mg(2+).

The protein belongs to the CRISPR-associated endoribonuclease Cas2 protein family. In terms of assembly, homodimer, forms a heterotetramer with a Cas1 homodimer. Mg(2+) is required as a cofactor.

In terms of biological role, CRISPR (clustered regularly interspaced short palindromic repeat), is an adaptive immune system that provides protection against mobile genetic elements (viruses, transposable elements and conjugative plasmids). CRISPR clusters contain sequences complementary to antecedent mobile elements and target invading nucleic acids. CRISPR clusters are transcribed and processed into CRISPR RNA (crRNA). Functions as a ssRNA-specific endoribonuclease. Involved in the integration of spacer DNA into the CRISPR cassette. The chain is CRISPR-associated endoribonuclease Cas2 1 from Synechocystis sp. (strain ATCC 27184 / PCC 6803 / Kazusa).